The primary structure comprises 754 residues: MAVNKGYTGYNKELNAMAATHAYIRLSTLMSQIESWQATRASVLTHLGVMLNGVSKLGERSFFSRTKRFGAHTSDGDEIFCDLGGEAVTQILSRLTVALQSARGEGAQTRNAKRGAAPGTSQVENEEQGQTDQTLAISNAVAELMIFVRTKDFTMNECYTQDSFEAKYNLKWEGSSXRDGVSGKLRAQIVEEFQNRLIIADDLGIFPRRDVDGVIIRNEPEVVYSELEDKLLSFESSVYHPKAVTVEFEVPVATGTTTTDDEITTEDVEMVIVTEVLVDDESDYYWLYFVLLLTSFLITCFILLSRRFIHFLGNRGGPGAPLCRRFATRLWSIRLWLLRKATRRYGNLGVVRKTHSQTTMRKYLRDYNFQLEEWETAIGCTPREALIVADQHILVRAVQRIVDSVGDVDSVDAVRKVFNGYKVRNFKIEKWLNKQTVNSALAVLNDSTVPENVVLSEGMLSLQTATFEEVLRCNVESQRESAYFNELIALQFAFRLVGTPEFSDFVLAYKGPAYPCYVEAINRHGTCIIQHHVDEDQKRKNDRAIEWLLMAGQGAFVVSSVVTTGVVVFKIHKWLKQRLLLRALSMLPSVGGGGNGGGGGSLPPQALELFDRAGTFEERLAALQNGLDLSPENMEVFTPEELKTEIRHVVQAYADSSYHVADEPYLRGVGVTVVTGLPEAVGEITTTGSEVSSVDTSISLGVPGRARRRAVSKNTRMYPSTSGQSYNSYKSPRVSGKSGVGSMKMKIASKPMAS.

Disordered stretches follow at residues 103-131 (RGEG…QGQT) and 713-740 (KNTR…KSGV). The span at 713–730 (KNTRMYPSTSGQSYNSYK) shows a compositional bias: polar residues.

This sequence belongs to the virgaviridae capsid protein family.

It is found in the virion. Its function is as follows. Minor capsid protein involved in virus transmission by the vector. The chain is 84 kDa readthrough protein (CP-CP2) from Soil-borne wheat mosaic virus (strain United States/Nebraska/1981) (SBWMV).